Reading from the N-terminus, the 362-residue chain is Glutamate 5-kinase (362 aa).

Lysine 3 contacts ATP. Residues serine 43, aspartate 128, and asparagine 140 each contribute to the substrate site. Residues 160–161 and 202–208 each bind ATP; these read TD and TGGMRTK. Positions 267–348 constitute a PUA domain; that stretch reads PGTILIDAGA…REIEPILGYS (82 aa).

It belongs to the glutamate 5-kinase family.

The protein resides in the cytoplasm. The enzyme catalyses L-glutamate + ATP = L-glutamyl 5-phosphate + ADP. It participates in amino-acid biosynthesis; L-proline biosynthesis; L-glutamate 5-semialdehyde from L-glutamate: step 1/2. In terms of biological role, catalyzes the transfer of a phosphate group to glutamate to form L-glutamate 5-phosphate. The polypeptide is Glutamate 5-kinase (Xanthomonas campestris pv. campestris (strain 8004)).